The chain runs to 212 residues: Pyrrolidone-carboxylate peptidase (212 aa).

Residues E80, C143, and H165 contribute to the active site.

It belongs to the peptidase C15 family. As to quaternary structure, homotetramer.

Its subcellular location is the cytoplasm. The enzyme catalyses Release of an N-terminal pyroglutamyl group from a polypeptide, the second amino acid generally not being Pro.. Functionally, removes 5-oxoproline from various penultimate amino acid residues except L-proline. In Vibrio vulnificus (strain CMCP6), this protein is Pyrrolidone-carboxylate peptidase.